Reading from the N-terminus, the 680-residue chain is Tumor protein 63 (680 aa).

Positions 1–107 (MNFETSRCAT…MQDSDLSDPM (107 aa)) are transcription activation. Over residues 123 to 157 (QIQNGSSSTSPYNTDHAQNSVTAPSPYAQPSSTFD) the composition is skewed to polar residues. A disordered region spans residues 123–171 (QIQNGSSSTSPYNTDHAQNSVTAPSPYAQPSSTFDALSPSPAIPSNTDY). Residues 170-362 (DYPGPHSFDV…KADEDSIRKQ (193 aa)) mediate DNA binding. Residues Cys-244, His-247, Cys-308, and Cys-312 each coordinate Zn(2+). The span at 351–360 (DRKADEDSIR) shows a compositional bias: basic and acidic residues. Disordered regions lie at residues 351–393 (DRKA…IKKR) and 435–472 (YRQQQQQQHQHLLQKQTSIQSPSSYGNSSPPLNKMNSM). The segment at 352–388 (RKADEDSIRKQQVSDSTKNGDGTKRPFRQNTHGIQMT) is interaction with HIPK2. 2 stretches are compositionally biased toward polar residues: residues 361–371 (KQQVSDSTKNG) and 379–389 (RQNTHGIQMTS). The segment at 394-443 (RSPDDELLYLPVRGRETYEMLLKIKESLELMQYLPQHTIETYRQQQQQQH) is oligomerization. The segment covering 437–450 (QQQQQQHQHLLQKQ) has biased composition (low complexity). A compositionally biased stretch (polar residues) spans 451–472 (TSIQSPSSYGNSSPPLNKMNSM). In terms of domain architecture, SAM spans 541–607 (PPYPTDCSIV…WKGILDHRQL (67 aa)). A transactivation inhibition region spans residues 610–680 (FSSPSHLLRT…KQQRIKEEGE (71 aa)). Lys-676 is covalently cross-linked (Glycyl lysine isopeptide (Lys-Gly) (interchain with G-Cter in SUMO)).

It belongs to the p53 family. In terms of assembly, binds DNA as a homotetramer. Isoform composition of the tetramer may determine transactivation activity. Isoforms Alpha and Gamma interact with HIPK2. Interacts with SSRP1, leading to stimulate coactivator activity. Isoform 1 and isoform 2 interact with WWP1. Interacts with PDS5A. Isoform 5 (via activation domain) interacts with NOC2L. Requires Zn(2+) as cofactor. Post-translationally, may be sumoylated. In terms of processing, ubiquitinated. Polyubiquitination involves WWP1 and leads to proteasomal degradation of this protein. Widely expressed, notably in heart, kidney, placenta, prostate, skeletal muscle, testis and thymus, although the precise isoform varies according to tissue type. Progenitor cell layers of skin, breast, eye and prostate express high levels of DeltaN-type isoforms. Isoform 10 is predominantly expressed in skin squamous cell carcinomas, but not in normal skin tissues.

The protein localises to the nucleus. In terms of biological role, acts as a sequence specific DNA binding transcriptional activator or repressor. The isoforms contain a varying set of transactivation and auto-regulating transactivation inhibiting domains thus showing an isoform specific activity. Isoform 2 activates RIPK4 transcription. May be required in conjunction with TP73/p73 for initiation of p53/TP53 dependent apoptosis in response to genotoxic insults and the presence of activated oncogenes. Involved in Notch signaling by probably inducing JAG1 and JAG2. Plays a role in the regulation of epithelial morphogenesis. The ratio of DeltaN-type and TA*-type isoforms may govern the maintenance of epithelial stem cell compartments and regulate the initiation of epithelial stratification from the undifferentiated embryonal ectoderm. Required for limb formation from the apical ectodermal ridge. Activates transcription of the p21 promoter. In Homo sapiens (Human), this protein is Tumor protein 63 (TP63).